The chain runs to 113 residues: MLVLFLLGTVFLLCPYWGELHDPIKATEIMCYECKKYHLGLCYGVMTSCSLKHKQSCAVENFYILTRKGQSMYHYSKLSCMTSCEDINFLGFTKRVELICCDHSNYCNLPEGV.

Residues 1-26 (MLVLFLLGTVFLLCPYWGELHDPIKA) form the signal peptide. Residues 29 to 110 (IMCYECKKYH…CDHSNYCNLP (82 aa)) form the UPAR/Ly6 domain. 4 disulfides stabilise this stretch: Cys31/Cys57, Cys34/Cys42, Cys49/Cys80, and Cys84/Cys101.

This sequence belongs to the PATE family. Isoform 1 and isoform 2 are expressed in prostate and testis. Isoform 2 is expressed in male and female brain at equivalent levels, in particular in cerebellum, cerebral cortex, corpus callosum, occipital, parrietal and temporal lobes, and pons, but not in amygdala, cerebral peduncle, hippocampus and thalamus.

The protein localises to the secreted. This chain is Prostate and testis expressed protein 2 (PATE2), found in Homo sapiens (Human).